We begin with the raw amino-acid sequence, 130 residues long: Small ribosomal subunit protein uS9 (130 aa).

Belongs to the universal ribosomal protein uS9 family.

This is Small ribosomal subunit protein uS9 from Streptococcus suis (strain 98HAH33).